A 190-amino-acid chain; its full sequence is MASRGKSETSKLRQNMEEQLDRLMQQLQDLEECREDLEEEEYEETKKETLEQLSEFNDSLKKLMSGNMTLVDELGGMQLAIQAAISQAFKTPEVIRLFAKKQPGQLRTRLAEMDRDVMVGKLSRDVFTQQKVEILTALRKLGEKLTTEDEAFLAANASATLSHFEKVTASLGSEDKIMALASSGVGKTQT.

The stretch at 6 to 64 forms a coiled coil; that stretch reads KSETSKLRQNMEEQLDRLMQQLQDLEECREDLEEEEYEETKKETLEQLSEFNDSLKKLM.

It belongs to the CTNNBIP1 family. As to quaternary structure, does not interact with CTNNB1.

In terms of biological role, required for neuronal survival during early development. In Danio rerio (Zebrafish), this protein is Protein LZIC (lzic).